A 379-amino-acid chain; its full sequence is Bifunctional riboflavin kinase/FMN phosphatase (379 aa).

S2 is subject to N-acetylserine. The active-site Nucleophile; for FMN phosphatase activity is the D17. D17 and D19 together coordinate Mg(2+). D19 (proton donor; for FMN phosphatase activity) is an active-site residue. G248, K254, T260, and N262 together coordinate ATP. T260 is a Mg(2+) binding site. The Nucleophile; for riboflavin kinase activity role is filled by E312. ATP is bound by residues L315, H317, and Y324. FMN contacts are provided by R337 and F342.

The protein in the N-terminal section; belongs to the HAD-like hydrolase superfamily. CbbY/CbbZ/Gph/YieH family. It in the C-terminal section; belongs to the flavokinase family. As to quaternary structure, monomer. Mg(2+) is required as a cofactor.

The catalysed reaction is riboflavin + ATP = FMN + ADP + H(+). It catalyses the reaction FMN + H2O = riboflavin + phosphate. The protein operates within cofactor biosynthesis; FMN biosynthesis; FMN from riboflavin (ATP route): step 1/1. Its function is as follows. Bifunctional enzyme that catalyzes the hydrolysis of flavin-mononucleotide (FMN) to riboflavin (vitamin B2) and the phosphorylation of riboflavin to form (FMN) coenzyme. The polypeptide is Bifunctional riboflavin kinase/FMN phosphatase (Arabidopsis thaliana (Mouse-ear cress)).